Consider the following 236-residue polypeptide: MGVEGCTKCIKYLLFVFNFVFWLAGGVILGVALWLRHDPQTTNLLYLELGDKPAPNTFYVGIYILIAVGAVMMFVGFLGCYGAIQESQCLLGTFFTCLVILFACEVAAGIWGFVNKDQIAKDVKQFYDQALQQAVVDDDANNAKAVVKTFHETLDCCGSSTLTALTTSVLKNNLCPSGSNIISNLFKEDCHQKIDDLFSGKLYLIGIAAIVVAVIMIFEMILSMVLCCGIRNSSVY.

Over 1–12 (MGVEGCTKCIKY) the chain is Cytoplasmic. The helical transmembrane segment at 13 to 33 (LLFVFNFVFWLAGGVILGVAL) threads the bilayer. Topologically, residues 34-63 (WLRHDPQTTNLLYLELGDKPAPNTFYVGIY) are extracellular. The chain crosses the membrane as a helical span at residues 64–84 (ILIAVGAVMMFVGFLGCYGAI). The Cytoplasmic segment spans residues 85-89 (QESQC). The chain crosses the membrane as a helical span at residues 90 to 112 (LLGTFFTCLVILFACEVAAGIWG). Residues 113 to 201 (FVNKDQIAKD…QKIDDLFSGK (89 aa)) lie on the Extracellular side of the membrane. 2 disulfides stabilise this stretch: C156-C190 and C157-C175. The chain crosses the membrane as a helical span at residues 202–224 (LYLIGIAAIVVAVIMIFEMILSM). E219 lines the cholesterol pocket. Topologically, residues 225 to 236 (VLCCGIRNSSVY) are cytoplasmic.

It belongs to the tetraspanin (TM4SF) family. Homodimer. Part of a complex composed of CD19, CR2/CD21, CD81 and IFITM1/CD225 in the membrane of mature B cells. Interacts (via the second extracellular domain) with CD19; this interaction is initiated early during biosynthesis in the ER and enables trafficking of only properly folded CD19. Part of a complex that includes MHC class II/HLA-DR molecules and IFITM1. Interacts with IFITM1. Interacts with IFITM2 and IFITM3. Part of integrin-tetraspanin complex composed of CD9, CD81, beta-1 and beta-2 integrins in the membrane of monocyte/macrophages. Interacts (via the second extracellular domain) with integrin ITGAV:ITGB3. Interacts with CD247/CD3 zeta, ICAM1 and CD9 at the immune synapse on T cell membrane. Part of a GPCR-tetraspanin complex consisting at least of ADGRG1, CD81, possibly CD9, and GNA11 in which CD81 enhances the association of ADGRG1 with GNA11. Part of a complex composed of CD9, CD81, PTGFRN and IGSF8. Interacts directly with IGSF8. Interacts with CD53 and SCIMP. Interacts with SAMHD1 (via its C-terminus). Interacts with glypican GPC3 and with the transcriptional repressor HHEX; binding to GPC3 decreases the availability of free CD81 for binding to HHEX, resulting in nuclear translocation of HHEX and transcriptional repression. Interacts with CLDN1. Interacts with CLDN6 and CLDN9. In terms of processing, not glycosylated. Likely constitutively palmitoylated at low levels. Protein palmitoylation is up-regulated upon coligation of BCR and CD9-C2R-CD81 complexes in lipid rafts.

The protein resides in the cell membrane. It is found in the basolateral cell membrane. Functionally, structural component of specialized membrane microdomains known as tetraspanin-enriched microdomains (TERMs), which act as platforms for receptor clustering and signaling. Essential for trafficking and compartmentalization of CD19 receptor on the surface of activated B cells. Upon initial encounter with microbial pathogens, enables the assembly of CD19-CR2/CD21 and B cell receptor (BCR) complexes at signaling TERMs, lowering the threshold dose of antigen required to trigger B cell clonal expansion and antibody production. In T cells, facilitates the localization of CD247/CD3 zeta at antigen-induced synapses with B cells, providing for costimulation and polarization toward T helper type 2 phenotype. Present in MHC class II compartments, may also play a role in antigen presentation. Can act both as positive and negative regulator of homotypic or heterotypic cell-cell fusion processes. Positively regulates sperm-egg fusion and may be involved in acrosome reaction. In myoblasts, associates with CD9 and PTGFRN and inhibits myotube fusion during muscle regeneration. In macrophages, associates with CD9 and beta-1 and beta-2 integrins, and prevents macrophage fusion into multinucleated giant cells specialized in ingesting complement-opsonized large particles. Also prevents the fusion of mononuclear cell progenitors into osteoclasts in charge of bone resorption. May regulate the compartmentalization of enzymatic activities. In T cells, defines the subcellular localization of dNTPase SAMHD1 and permits its degradation by the proteasome, thereby controlling intracellular dNTP levels. Also involved in cell adhesion and motility. Positively regulates integrin-mediated adhesion of macrophages, particularly relevant for the inflammatory response in the lung. This chain is CD81 antigen (CD81), found in Pan troglodytes (Chimpanzee).